Consider the following 61-residue polypeptide: Small ribosomal subunit protein uS14 (61 aa).

Zn(2+)-binding residues include Cys24, Cys27, Cys40, and Cys43.

Belongs to the universal ribosomal protein uS14 family. Zinc-binding uS14 subfamily. Part of the 30S ribosomal subunit. Contacts proteins S3 and S10. Zn(2+) is required as a cofactor.

Functionally, binds 16S rRNA, required for the assembly of 30S particles and may also be responsible for determining the conformation of the 16S rRNA at the A site. The chain is Small ribosomal subunit protein uS14 from Leptospira biflexa serovar Patoc (strain Patoc 1 / Ames).